Here is a 299-residue protein sequence, read N- to C-terminus: MTFKSGFVAILGRPNVGKSTFLNHVMGQKIAIMSDKAQTTRNKIMGIYTTDKEQIVFIDTPGIHKPKTALGDFMVESAYSTLREVDTVLFMVPADEARGKGDDMIIERLKAAKVPVILVVNKIDKVHPDQLLSQIDDFRNQMDFKEIVPISALQGNNVSRLVDILSENLGEGFQYFPSDQITDHPERFLVSEMVREKVLHLTREEIPHSVAVVVDSMKRDEETDKVHIRATIMVERDSQKGIIIGKGGAMLKKIGSMARRDIELMLGDKVFLETWVKVKKNWRDKKLDLADFGYNEREY.

One can recognise an Era-type G domain in the interval 4–171; sequence KSGFVAILGR…VDILSENLGE (168 aa). The segment at 12 to 19 is G1; sequence GRPNVGKS. Residue 12-19 participates in GTP binding; it reads GRPNVGKS. The G2 stretch occupies residues 38–42; it reads QTTRN. Residues 59-62 are G3; that stretch reads DTPG. GTP-binding positions include 59–63 and 121–124; these read DTPGI and NKID. Residues 121 to 124 form a G4 region; it reads NKID. The G5 stretch occupies residues 150 to 152; it reads ISA. In terms of domain architecture, KH type-2 spans 202 to 280; the sequence is TREEIPHSVA…FLETWVKVKK (79 aa).

This sequence belongs to the TRAFAC class TrmE-Era-EngA-EngB-Septin-like GTPase superfamily. Era GTPase family. In terms of assembly, monomer.

It localises to the cytoplasm. It is found in the cell membrane. In terms of biological role, an essential GTPase that binds both GDP and GTP, with rapid nucleotide exchange. Plays a role in 16S rRNA processing and 30S ribosomal subunit biogenesis and possibly also in cell cycle regulation and energy metabolism. This Streptococcus pneumoniae (strain JJA) protein is GTPase Era.